Reading from the N-terminus, the 29-residue chain is Cytochrome b6-f complex subunit 8 (29 aa).

The helical transmembrane segment at 3 to 23 (IVSLAWAVLMVVFTFSLSLVV) threads the bilayer.

The protein belongs to the PetN family. In terms of assembly, the 4 large subunits of the cytochrome b6-f complex are cytochrome b6, subunit IV (17 kDa polypeptide, PetD), cytochrome f and the Rieske protein, while the 4 small subunits are PetG, PetL, PetM and PetN. The complex functions as a dimer.

Its subcellular location is the plastid. The protein resides in the chloroplast thylakoid membrane. In terms of biological role, component of the cytochrome b6-f complex, which mediates electron transfer between photosystem II (PSII) and photosystem I (PSI), cyclic electron flow around PSI, and state transitions. The polypeptide is Cytochrome b6-f complex subunit 8 (Drimys granadensis).